A 347-amino-acid polypeptide reads, in one-letter code: Dihydroorotate dehydrogenase (quinone) (347 aa).

FMN-binding positions include 62–66 and threonine 86; that span reads AGLDK. Residue lysine 66 participates in substrate binding. 111 to 115 is a binding site for substrate; the sequence is NRMGF. FMN-binding residues include asparagine 142 and asparagine 175. Asparagine 175 is a binding site for substrate. The Nucleophile role is filled by serine 178. Residue asparagine 180 coordinates substrate. FMN is bound by residues lysine 220 and threonine 248. 249-250 provides a ligand contact to substrate; it reads NT. FMN contacts are provided by residues glycine 271, glycine 300, and 321–322; that span reads YS.

The protein belongs to the dihydroorotate dehydrogenase family. Type 2 subfamily. Monomer. It depends on FMN as a cofactor.

The protein resides in the cell membrane. It carries out the reaction (S)-dihydroorotate + a quinone = orotate + a quinol. It functions in the pathway pyrimidine metabolism; UMP biosynthesis via de novo pathway; orotate from (S)-dihydroorotate (quinone route): step 1/1. Catalyzes the conversion of dihydroorotate to orotate with quinone as electron acceptor. The chain is Dihydroorotate dehydrogenase (quinone) from Dechloromonas aromatica (strain RCB).